A 3459-amino-acid chain; its full sequence is uncharacterized protein (3459 aa).

Residues 158–167 (NDDDWIFNED) are compositionally biased toward acidic residues. Disordered regions lie at residues 158–230 (NDDD…NNNN) and 400–447 (YGYI…NDEK). Basic and acidic residues predominate over residues 168 to 184 (DEKKNKNNDGNDNRYDY). A compositionally biased stretch (low complexity) spans 185–201 (NDLQNNNNNDNNKYDYN). Residues 204 to 221 (DDEKKNKNNDGDDNKYDY) show a composition bias toward basic and acidic residues. Over residues 406 to 443 (DNDDGDDYNDDNDNDDNYNDDNYNDDNYNDDNYNDDNY) the composition is skewed to acidic residues. The stretch at 771–851 (VNEKKKGENE…NEMNKDEENE (81 aa)) forms a coiled coil. A helical membrane pass occupies residues 1059–1079 (LIYMIYLFFTYKKYDLLLMFI). 3 disordered regions span residues 1148-1187 (RRQE…NDYD), 1399-1467 (IPTQ…NDDD), and 1711-1733 (QKKK…NKEN). A compositionally biased stretch (basic and acidic residues) spans 1404–1463 (DKNETDEGNKNETDEGDKNETDEGDKNETDEGNKNETEEIYKNETDEGNKNETEEIYKND). A run of 2 helical transmembrane segments spans residues 2059 to 2079 (FLLF…IFFF) and 2197 to 2217 (IIQC…DFLF). Disordered stretches follow at residues 2582 to 2644 (IYKD…DNNN) and 2776 to 2835 (GRIW…DKGD). Residues 2592–2629 (DNNDDDNINDDDNINDDDNINDDDNNNDDDNNNDDNND) show a composition bias toward acidic residues. A compositionally biased stretch (basic and acidic residues) spans 2779 to 2821 (WKREENGEKKKNEKNESEKNERNEKNEKNEKHEKHEKHEKNEK). Residues 2785-2820 (GEKKKNEKNESEKNERNEKNEKNEKHEKHEKHEKNE) adopt a coiled-coil conformation. 2 helical membrane-spanning segments follow: residues 3229–3249 (LFII…SFIL) and 3296–3316 (LLFF…NINS).

It localises to the membrane. This is an uncharacterized protein from Plasmodium falciparum (isolate 3D7).